Consider the following 381-residue polypeptide: Regulatory protein RapF (381 aa).

The Mn(2+) site is built by Leu-40, Met-43, and Glu-45. TPR repeat units follow at residues 101 to 137 (YYFNFFRGMYELDQREYLSAIKFFKKAESKLIFVKDR), 148 to 181 (SESYYYMKQTYFSMDYARQAYEIYKEHEAYNIRL), 182 to 215 (LQCHSLFATNFLDLKQYEDAISHFQKAYSMAEAE), 222 to 255 (GRTLYNIGLCKNSQSQYEDAIPYFKRAIAVFEES), 262 to 295 (PQAYFLITQIHYKLGKIDKAHEYHSKGMAYSQKA), and 337 to 370 (EDFAIDVAKYYHERKNFQKASAYFLKVEQVRQLI).

Belongs to the Rap family. As to quaternary structure, monomer. Is monomeric either alone or in complex with PhrF. Interacts specifically with the C-terminal DNA-binding domain of ComA. Interacts with PhrF.

The protein localises to the cytoplasm. Its activity is regulated as follows. Inhibited by PhrF, which prevents RapF-ComA interaction. Interaction with PhrF induces a conformational change in RapF, which is propagated to the ComA binding site and causes the dissociation of ComA from RapF. In terms of biological role, involved in the regulation of genetic competence development. Inhibits the activity of ComA, a transcriptional factor that regulates the development of genetic competence. Acts by binding to ComA, leading to the inhibition of its DNA-binding activity. May also affect transcription independently of ComA. This Bacillus subtilis (strain 168) protein is Regulatory protein RapF (rapF).